An 82-amino-acid chain; its full sequence is Small ribosomal subunit protein bS16 (82 aa).

This sequence belongs to the bacterial ribosomal protein bS16 family.

This Dehalococcoides mccartyi (strain ATCC BAA-2266 / KCTC 15142 / 195) (Dehalococcoides ethenogenes (strain 195)) protein is Small ribosomal subunit protein bS16.